The following is a 224-amino-acid chain: Germin-like protein 8-12 (224 aa).

An N-terminal signal peptide occupies residues 1-23; the sequence is MASSSLFLLGALLVLASWQAIVA. Cys33 and Cys48 are disulfide-bonded. The Cupin type-1 domain occupies 60 to 213; that stretch reads FNAAKFDMPR…AFQVEKKLID (154 aa). N-linked (GlcNAc...) asparagine glycosylation occurs at Asn78. Mn(2+)-binding residues include His111, His113, Glu118, and His158.

This sequence belongs to the germin family. Oligomer (believed to be a pentamer but probably hexamer).

The protein localises to the secreted. The protein resides in the extracellular space. It localises to the apoplast. In terms of biological role, plays a role in broad-spectrum disease resistance. Probably has no oxalate oxidase activity even if the active site is conserved. This Oryza sativa subsp. japonica (Rice) protein is Germin-like protein 8-12.